The following is a 500-amino-acid chain: Trans-cinnamate 4-monooxygenase (500 aa).

The helical transmembrane segment at Ala3–Val23 threads the bilayer. (E)-cinnamate-binding positions include Arg213–Gln218 and Ala302. Cys442 is a binding site for heme.

Belongs to the cytochrome P450 family. The cofactor is heme. As to expression, expressed in roots and leaves.

It localises to the membrane. The enzyme catalyses (E)-cinnamate + reduced [NADPH--hemoprotein reductase] + O2 = (E)-4-coumarate + oxidized [NADPH--hemoprotein reductase] + H2O + H(+). It participates in phenylpropanoid metabolism; trans-4-coumarate biosynthesis; trans-4-coumarate from trans-cinnamate: step 1/1. Catalyzes the first oxidative step of the phenylpropanoid pathway in higher plants by transforming trans-cinnamate into p-coumarate. The compounds formed by this pathway are essential components for lignification, pollination, and defense against ultraviolet light, predators and pathogens. The sequence is that of Trans-cinnamate 4-monooxygenase from Oryza sativa subsp. japonica (Rice).